A 40-amino-acid polypeptide reads, in one-letter code: Large ribosomal subunit protein bL36B (40 aa).

The protein belongs to the bacterial ribosomal protein bL36 family.

This Clavibacter michiganensis subsp. michiganensis (strain NCPPB 382) protein is Large ribosomal subunit protein bL36B.